Consider the following 318-residue polypeptide: DNA-directed RNA polymerase subunit alpha 2 (318 aa).

Residues 1–227 (MALENLLHPT…NQLRNILDIE (227 aa)) form an alpha N-terminal domain (alpha-NTD) region. The alpha C-terminal domain (alpha-CTD) stretch occupies residues 242–318 (INPILLKHVE…TLIENWPQDL (77 aa)).

This sequence belongs to the RNA polymerase alpha chain family. In terms of assembly, homodimer. The RNAP catalytic core consists of 2 alpha, 1 beta, 1 beta' and 1 omega subunit. When a sigma factor is associated with the core the holoenzyme is formed, which can initiate transcription.

The enzyme catalyses RNA(n) + a ribonucleoside 5'-triphosphate = RNA(n+1) + diphosphate. DNA-dependent RNA polymerase catalyzes the transcription of DNA into RNA using the four ribonucleoside triphosphates as substrates. This Francisella tularensis subsp. tularensis (strain FSC 198) protein is DNA-directed RNA polymerase subunit alpha 2.